Consider the following 652-residue polypeptide: Carboxypeptidase Z (652 aa).

Residues Met-1–Ala-18 form the signal peptide. The region spanning Asn-27–Pro-160 is the FZ domain. Intrachain disulfides connect Cys-43/Cys-109, Cys-51/Cys-102, Cys-93/Cys-129, Cys-118/Cys-157, and Cys-122/Cys-146. In terms of domain architecture, Peptidase M14 spans Ser-186 to Val-502. Positions 248 and 251 each coordinate Zn(2+). N-linked (GlcNAc...) asparagine glycosylation occurs at Asn-281. His-380 is a binding site for Zn(2+). Glu-472 serves as the catalytic Proton donor/acceptor. The segment at Leu-595–Gly-629 is disordered.

This sequence belongs to the peptidase M14 family. Requires Zn(2+) as cofactor. In placenta, it is present within invasive trophoblasts and in the surrounding extracellular space. Also present in amnion cells, but is not readily apparent in the extracellular matrix of this cell type. Present in normal pituitary gland and neoplastic pituitary gland (especially POMC-, GH- and PRL-producing adenomas) (at protein level). Widely expressed.

It localises to the secreted. The protein resides in the extracellular space. The protein localises to the extracellular matrix. Its activity is regulated as follows. Inhibited by 2-mercaptomethyl-3-guanidinoethylthiopropanoic acid (MGTA) and guanidinoethylmercaptosuccinic acid (GEMSA). Inhibited by chelating agents such as EDTA and EGTA. Its function is as follows. Cleaves substrates with C-terminal arginine residues. Probably modulates the Wnt signaling pathway, by cleaving some undefined protein. May play a role in cleavage during prohormone processing. This is Carboxypeptidase Z (CPZ) from Homo sapiens (Human).